Reading from the N-terminus, the 555-residue chain is Inorganic phosphate transporter 1-11 (555 aa).

The Cytoplasmic portion of the chain corresponds to 1–28; that stretch reads MADADGGSNLAVLDALDSARTQMYHMKA. The helical transmembrane segment at 29-49 threads the bilayer; it reads IVIAGMGFFTDAYDLFCISTV. Topologically, residues 50-77 are extracellular; that stretch reads SKLLGRLYYQPDGSTDSKPGALSKTANN. Residues 78 to 98 traverse the membrane as a helical segment; that stretch reads MVIGVALVGTLMGQLVFGYFG. The Cytoplasmic portion of the chain corresponds to 99 to 105; sequence DKLGRKR. A helical membrane pass occupies residues 106-126; that stretch reads VYGVTLILMAACAIGSGLSFG. The Extracellular portion of the chain corresponds to 127-130; it reads SSRK. A helical transmembrane segment spans residues 131–151; the sequence is AVIGTLCFFRFWLGFGIGGDY. Residues 152–167 lie on the Cytoplasmic side of the membrane; that stretch reads PLSATIMSEYSNKKTR. The helical transmembrane segment at 168–188 threads the bilayer; sequence GAFIAAVFAMQGVGIIFAGLV. Over 189-216 the chain is Extracellular; sequence SMIVSSIFLTYNKAPSYKGNHDLSRQMP. A helical membrane pass occupies residues 217–237; it reads AADYVWRIVLMIGAFPALATF. The Cytoplasmic portion of the chain corresponds to 238–298; it reads YWRMKMPETA…PLLSMEFARR (61 aa). Residues 299–319 form a helical membrane-spanning segment; sequence HGLHLIGTTTTWFLLDIAFYS. The Extracellular portion of the chain corresponds to 320–351; it reads QNLTQKDIFPAMGLISGAAEVNALTEMFQISK. Residues 352–372 traverse the membrane as a helical segment; it reads ASFLVALLGTFPGYWVTVALI. Residues 373–377 lie on the Cytoplasmic side of the membrane; that stretch reads DKMGR. Residues 378 to 398 form a helical membrane-spanning segment; it reads YMIQLIGFFMMSMFMLAMGIL. The Extracellular segment spans residues 399 to 408; the sequence is YDYLKTHHFL. The chain crosses the membrane as a helical span at residues 409–436; it reads FGLLYALTFFFANFGPNSTTFVLPAELF. Residues 437–442 are Cytoplasmic-facing; it reads PTRVRS. Residues 443–463 traverse the membrane as a helical segment; sequence TCHAISAAAGKAGAIVAAFGI. At 464–477 the chain is on the extracellular side; it reads QKLTYNSQVKSIKK. The chain crosses the membrane as a helical span at residues 478-498; sequence ALIILSITNMLGFFFTFLVPE. At 499 to 555 the chain is on the cytoplasmic side; sequence TMGRSLEEISGEDGNTGAGGGGAPAAANAGVGVSASDVSRDEKFPASSTEWQTSMHA. The tract at residues 506–555 is disordered; sequence EISGEDGNTGAGGGGAPAAANAGVGVSASDVSRDEKFPASSTEWQTSMHA. A compositionally biased stretch (gly residues) spans 512-521; the sequence is GNTGAGGGGA. The span at 522–535 shows a compositional bias: low complexity; that stretch reads PAAANAGVGVSASD. A compositionally biased stretch (polar residues) spans 544 to 555; sequence ASSTEWQTSMHA.

The protein belongs to the major facilitator superfamily. Phosphate:H(+) symporter (TC 2.A.1.9) family.

The protein resides in the membrane. Functionally, symbiosis-specific regulated inorganic phosphate (Pi) transporter. Probably involved in symbiosis-mediated Pi uptake in roots colonized by myccorhizal fungi. This is Inorganic phosphate transporter 1-11 (PHT1-11) from Oryza sativa subsp. japonica (Rice).